A 285-amino-acid polypeptide reads, in one-letter code: Bifunctional protein FolD (285 aa).

Residues 166–168 (GAS) and I232 contribute to the NADP(+) site.

The protein belongs to the tetrahydrofolate dehydrogenase/cyclohydrolase family. In terms of assembly, homodimer.

It catalyses the reaction (6R)-5,10-methylene-5,6,7,8-tetrahydrofolate + NADP(+) = (6R)-5,10-methenyltetrahydrofolate + NADPH. The enzyme catalyses (6R)-5,10-methenyltetrahydrofolate + H2O = (6R)-10-formyltetrahydrofolate + H(+). The protein operates within one-carbon metabolism; tetrahydrofolate interconversion. Functionally, catalyzes the oxidation of 5,10-methylenetetrahydrofolate to 5,10-methenyltetrahydrofolate and then the hydrolysis of 5,10-methenyltetrahydrofolate to 10-formyltetrahydrofolate. The sequence is that of Bifunctional protein FolD from Vibrio vulnificus (strain CMCP6).